The sequence spans 119 residues: uncharacterized protein (119 aa).

The next 2 membrane-spanning stretches (helical) occupy residues 7–27 (ILHNALYYVLIIIYEYVLLLV) and 32–52 (YFFEFLFLFLPLWLVFFFLML).

The protein resides in the membrane. This is an uncharacterized protein from Saccharomyces cerevisiae (strain ATCC 204508 / S288c) (Baker's yeast).